The chain runs to 354 residues: Putative ankyrin repeat protein L284 (354 aa).

ANK repeat units lie at residues Ile201–Asp230, Ser253–Val284, and Leu286–Ile314.

This Acanthamoeba polyphaga (Amoeba) protein is Putative ankyrin repeat protein L284.